A 66-amino-acid chain; its full sequence is Photosystem II reaction center protein H (66 aa).

A helical membrane pass occupies residues 27–47 (GAVPVMTVIGLLLLVFLVILL).

It belongs to the PsbH family. In terms of assembly, PSII is composed of 1 copy each of membrane proteins PsbA, PsbB, PsbC, PsbD, PsbE, PsbF, PsbH, PsbI, PsbJ, PsbK, PsbL, PsbM, PsbT, PsbX, PsbY, Psb30/Ycf12, peripheral proteins PsbO, CyanoQ (PsbQ), PsbU, PsbV and a large number of cofactors. It forms dimeric complexes.

The protein localises to the cellular thylakoid membrane. Its function is as follows. One of the components of the core complex of photosystem II (PSII), required for its stability and/or assembly. PSII is a light-driven water:plastoquinone oxidoreductase that uses light energy to abstract electrons from H(2)O, generating O(2) and a proton gradient subsequently used for ATP formation. It consists of a core antenna complex that captures photons, and an electron transfer chain that converts photonic excitation into a charge separation. This chain is Photosystem II reaction center protein H, found in Prochlorococcus marinus (strain MIT 9215).